A 317-amino-acid polypeptide reads, in one-letter code: Ribosomal protein L11 methyltransferase (317 aa).

Residues T158, G179, D201, and N244 each contribute to the S-adenosyl-L-methionine site.

This sequence belongs to the methyltransferase superfamily. PrmA family.

It localises to the cytoplasm. It catalyses the reaction L-lysyl-[protein] + 3 S-adenosyl-L-methionine = N(6),N(6),N(6)-trimethyl-L-lysyl-[protein] + 3 S-adenosyl-L-homocysteine + 3 H(+). Its function is as follows. Methylates ribosomal protein L11. The protein is Ribosomal protein L11 methyltransferase of Streptococcus pyogenes serotype M5 (strain Manfredo).